Here is a 299-residue protein sequence, read N- to C-terminus: MAQNLKDLAGRLPAGPRGMGTALKLLLGAGAVAYGVRESVFTVEGGHRAIFFNRIGGVQQDTILAEGLHFRIPWFQYPIIYDIRARPRKISSPTGSKDLQMVNISLRVLSRPNAQELPSMYQRLGLDYEERVLPSIVNEVLKSVVAKFNASQLITQRAQVSLLIRRELTERAKDFSLILDDVAITELSFSREYTAAVEAKQVAQQEAQRAQFLVEKAKQEQRQKIVQAEGEAEAAKMLGEALSKNPGYIKLRKIRAAQNISKTIATSQNRIYPTADNLVLNLQDESFTRGSDSLIKGKK.

Ala-2 carries the N-acetylalanine modification. A necessary for transcriptional repression region spans residues 19–49 (MGTALKLLLGAGAVAYGVRESVFTVEGGHRA). Tyr-128 is subject to Phosphotyrosine. Lys-147 is modified (N6-acetyllysine). The necessary for transcriptional repression stretch occupies residues 150-174 (ASQLITQRAQVSLLIRRELTERAKD). Residue Ser-151 is modified to Phosphoserine. Residues 190-238 (SREYTAAVEAKQVAQQEAQRAQFLVEKAKQEQRQKIVQAEGEAEAAKML) adopt a coiled-coil conformation. Residues Lys-200, Lys-236, Lys-250, and Lys-262 each carry the N6-acetyllysine modification.

Belongs to the prohibitin family. The mitochondrial prohibitin complex consists of two subunits (PHB1 and PHB2), assembled into a membrane-associated ring-shaped supercomplex of approximately 1 mDa. Interacts with ESR1, HDAC1 and HDAC5. Interacts with ZNF703. Interacts with STOML2. Interacts with ARFGEF3. Interacts with SPHK2. Interacts with COX4I1; the interaction associates PHB2 with COX. Interacts with MAP1LC3B (membrane-bound form LC3-II); the interaction is direct and upon mitochondrial depolarization and proteasome-dependent outer membrane rupture. Interacts with IGFBP6 (via C-terminal domain). Interacts with CLPB. Interacts with CD86 (via cytoplasmic domain); the interactions increases after priming with CD40. Interacts with AFG3L2. Interacts with DNAJC19. Interacts with AKT2; this interaction may be important for myogenic differentiation. In terms of processing, phosphorylated. Tyrosine phosphorylation is indirectly stimulated by IGFBP6.

Its subcellular location is the mitochondrion inner membrane. It localises to the cytoplasm. It is found in the nucleus. The protein localises to the cell membrane. Its function is as follows. Protein with pleiotropic attributes mediated in a cell-compartment- and tissue-specific manner, which include the plasma membrane-associated cell signaling functions, mitochondrial chaperone, and transcriptional co-regulator of transcription factors and sex steroid hormones in the nucleus. In the mitochondria, together with PHB, forms large ring complexes (prohibitin complexes) in the inner mitochondrial membrane (IMM) and functions as a chaperone protein that stabilizes mitochondrial respiratory enzymes and maintains mitochondrial integrity in the IMM, which is required for mitochondrial morphogenesis, neuronal survival, and normal lifespan. The prohibitin complex, with DNAJC19, regulates cardiolipin remodeling and the protein turnover of OMA1 in a cardiolipin-binding manner. Also regulates cytochrome-c oxidase assembly (COX) and mitochondrial respiration. Binding to sphingoid 1-phosphate (SPP) modulates its regulator activity. Has a key role of mitophagy receptor involved in targeting mitochondria for autophagic degradation. Involved in mitochondrial-mediated antiviral innate immunity, activates RIG-I-mediated signal transduction and production of IFNB1 and pro-inflammatory cytokine IL6. In terms of biological role, in the nucleus, serves as transcriptional co-regulator. Acts as a mediator of transcriptional repression by nuclear hormone receptors via recruitment of histone deacetylases. Functions as an estrogen receptor (ER)-selective coregulator that potentiates the inhibitory activities of antiestrogens and represses the activity of estrogens. Competes with NCOA1 for modulation of ER transcriptional activity. Functionally, in the plasma membrane, is involved in IGFBP6-induced cell migration. Cooperates with CD86 to mediate CD86-signaling in B lymphocytes that regulates the level of IgG1 produced through the activation of distal signaling intermediates. Upon CD40 engagement, required to activate NF-kappa-B signaling pathway via phospholipase C and protein kinase C activation. This is Prohibitin-2 (PHB2) from Pongo abelii (Sumatran orangutan).